The chain runs to 201 residues: Casparian strip membrane protein 4 (201 aa).

Residues 1-23 (MEGKAAVTTSTEHGDGEASRTAA) are disordered. Topologically, residues 1–41 (MEGKAAVTTSTEHGDGEASRTAARTVVSGSSRGGAASRALS) are cytoplasmic. A helical transmembrane segment spans residues 42–62 (VADLILRVVAVVAIVDSAIAM). Residues 63–87 (GTTNQTLPFFTQFLRFKAQYSDLPT) lie on the Extracellular side of the membrane. An N-linked (GlcNAc...) asparagine glycan is attached at Asn-66. The helical transmembrane segment at 88–108 (LTLFVVANSAVTAYLVLSIPL) threads the bilayer. Residues 109 to 122 (SVVHIIRSRASYSR) lie on the Cytoplasmic side of the membrane. A helical transmembrane segment spans residues 123–143 (LVLIFLDSVMLALVAAVASAS). At 144 to 172 (AAIVYLAHKGNVRANWFAVCQQFDSFCER) the chain is on the extracellular side. A helical transmembrane segment spans residues 173 to 193 (ISGPLIGSFAAMAVLLLLVLL). Topologically, residues 194-201 (SAAALARR) are cytoplasmic.

This sequence belongs to the Casparian strip membrane proteins (CASP) family. Homodimer and heterodimers.

It localises to the cell membrane. Regulates membrane-cell wall junctions and localized cell wall deposition. Required for establishment of the Casparian strip membrane domain (CSD) and the subsequent formation of Casparian strips, a cell wall modification of the root endodermis that determines an apoplastic barrier between the intraorganismal apoplasm and the extraorganismal apoplasm and prevents lateral diffusion. In Oryza sativa subsp. japonica (Rice), this protein is Casparian strip membrane protein 4.